A 343-amino-acid polypeptide reads, in one-letter code: tRNA N6-adenosine threonylcarbamoyltransferase (343 aa).

Residues His115 and His119 each contribute to the Fe cation site. Residues 137–141 (LVSGG), Asp170, Gly183, Asp187, and Asn276 contribute to the substrate site. A Fe cation-binding site is contributed by Asp306.

The protein belongs to the KAE1 / TsaD family. Fe(2+) serves as cofactor.

The protein localises to the cytoplasm. The catalysed reaction is L-threonylcarbamoyladenylate + adenosine(37) in tRNA = N(6)-L-threonylcarbamoyladenosine(37) in tRNA + AMP + H(+). In terms of biological role, required for the formation of a threonylcarbamoyl group on adenosine at position 37 (t(6)A37) in tRNAs that read codons beginning with adenine. Is involved in the transfer of the threonylcarbamoyl moiety of threonylcarbamoyl-AMP (TC-AMP) to the N6 group of A37, together with TsaE and TsaB. TsaD likely plays a direct catalytic role in this reaction. In Limosilactobacillus reuteri (strain DSM 20016) (Lactobacillus reuteri), this protein is tRNA N6-adenosine threonylcarbamoyltransferase.